The following is a 172-amino-acid chain: Gamma-crystallin-4 (172 aa).

Beta/gamma crystallin 'Greek key' domains lie at 1–37 (IFFYEERNFQGRCYECSSECSDLSSYFNRCNSIRVES) and 38–80 (GNWI…RFIP). The segment at 81-85 (HPHSQ) is connecting peptide. Beta/gamma crystallin 'Greek key' domains follow at residues 86–126 (YKMR…NVSD) and 127–169 (GHWM…RRVH).

It belongs to the beta/gamma-crystallin family. Monomer.

Functionally, crystallins are the dominant structural components of the vertebrate eye lens. The protein is Gamma-crystallin-4 (cryg4) of Xenopus laevis (African clawed frog).